The chain runs to 267 residues: Diaminopimelate epimerase (267 aa).

Substrate contacts are provided by asparagine 15 and asparagine 66. The active-site Proton donor is cysteine 75. Substrate contacts are provided by residues 76–77, asparagine 150, asparagine 183, and 201–202; these read GN and ER. Cysteine 210 functions as the Proton acceptor in the catalytic mechanism. 211 to 212 provides a ligand contact to substrate; the sequence is GT.

It belongs to the diaminopimelate epimerase family. As to quaternary structure, homodimer.

Its subcellular location is the cytoplasm. It catalyses the reaction (2S,6S)-2,6-diaminopimelate = meso-2,6-diaminopimelate. Its pathway is amino-acid biosynthesis; L-lysine biosynthesis via DAP pathway; DL-2,6-diaminopimelate from LL-2,6-diaminopimelate: step 1/1. Functionally, catalyzes the stereoinversion of LL-2,6-diaminopimelate (L,L-DAP) to meso-diaminopimelate (meso-DAP), a precursor of L-lysine and an essential component of the bacterial peptidoglycan. The sequence is that of Diaminopimelate epimerase from Bacteroides thetaiotaomicron (strain ATCC 29148 / DSM 2079 / JCM 5827 / CCUG 10774 / NCTC 10582 / VPI-5482 / E50).